Consider the following 253-residue polypeptide: 3-deoxy-manno-octulosonate cytidylyltransferase (253 aa).

The protein belongs to the KdsB family.

It is found in the cytoplasm. It catalyses the reaction 3-deoxy-alpha-D-manno-oct-2-ulosonate + CTP = CMP-3-deoxy-beta-D-manno-octulosonate + diphosphate. It participates in nucleotide-sugar biosynthesis; CMP-3-deoxy-D-manno-octulosonate biosynthesis; CMP-3-deoxy-D-manno-octulosonate from 3-deoxy-D-manno-octulosonate and CTP: step 1/1. It functions in the pathway bacterial outer membrane biogenesis; lipopolysaccharide biosynthesis. Functionally, activates KDO (a required 8-carbon sugar) for incorporation into bacterial lipopolysaccharide in Gram-negative bacteria. The sequence is that of 3-deoxy-manno-octulosonate cytidylyltransferase from Haemophilus ducreyi (strain 35000HP / ATCC 700724).